Reading from the N-terminus, the 301-residue chain is NDP-polyphosphate phosphotransferase 3 (301 aa).

A compositionally biased stretch (basic and acidic residues) spans Met-1–Arg-12. Residues Met-1 to Ile-21 form a disordered region.

The protein belongs to the polyphosphate kinase 2 (PPK2) family. Class I subfamily. Requires Mg(2+) as cofactor.

It carries out the reaction [phosphate](n) + ATP = [phosphate](n+1) + ADP. It catalyses the reaction [phosphate](n) + CTP = [phosphate](n+1) + CDP. The catalysed reaction is [phosphate](n) + GTP = [phosphate](n+1) + GDP. The enzyme catalyses [phosphate](n) + UTP = [phosphate](n+1) + UDP. Functionally, uses inorganic polyphosphate (polyP) as a donor to convert NDP to NTP. PolyP hydrolysis is slightly faster with UDP, but it can also use ADP, GDP and CDP. The chain is NDP-polyphosphate phosphotransferase 3 from Ruegeria pomeroyi (strain ATCC 700808 / DSM 15171 / DSS-3) (Silicibacter pomeroyi).